Consider the following 169-residue polypeptide: Small proline-rich protein 3 (169 aa).

Residues 1 to 24 (MSSYQQKQTFTPPPQLQQQQVKQP) show a composition bias toward low complexity. The interval 1–57 (MSSYQQKQTFTPPPQLQQQQVKQPSQPPPQEIFVPTTKEPCHSKVPQPGNTKIPEPG) is disordered. At Ser-2 the chain carries N-acetylserine. Tandem repeats lie at residues 43–50 (SKVPQPGN), 51–58 (TKIPEPGC), 59–66 (TKVPEPGC), 67–74 (TKVPEPGC), 75–82 (TKVPEPGC), 83–90 (TKVPEPGC), 91–98 (TKVPEPGC), 99–106 (TKVPEPGY), 107–114 (TKVPEPGS), 115–122 (IKVPDQGF), 123–130 (IKFPEPGA), 131–138 (IKVPEQGY), 139–146 (TKVPVPGY), and 147–154 (TKLPEPCP). Positions 43-154 (SKVPQPGNTK…GYTKLPEPCP (112 aa)) are 14 X 8 AA approximate tandem repeats. A disordered region spans residues 150 to 169 (PEPCPSTVTPGPAQQKTKQK). Over residues 155 to 169 (STVTPGPAQQKTKQK) the composition is skewed to polar residues.

Its subcellular location is the cytoplasm. In terms of biological role, cross-linked envelope protein of keratinocytes. The sequence is that of Small proline-rich protein 3 (SPRR3) from Homo sapiens (Human).